The sequence spans 206 residues: Small ribosomal subunit protein uS4 (206 aa).

In terms of domain architecture, S4 RNA-binding spans 96 to 156 (GRLDNVVYRM…EKAKKQSRVK (61 aa)).

This sequence belongs to the universal ribosomal protein uS4 family. In terms of assembly, part of the 30S ribosomal subunit. Contacts protein S5. The interaction surface between S4 and S5 is involved in control of translational fidelity.

One of the primary rRNA binding proteins, it binds directly to 16S rRNA where it nucleates assembly of the body of the 30S subunit. Functionally, with S5 and S12 plays an important role in translational accuracy. The protein is Small ribosomal subunit protein uS4 of Salmonella agona (strain SL483).